The following is a 325-amino-acid chain: Putative [LysW]-lysine/[LysW]-ornithine hydrolase (325 aa).

Residue H66 coordinates Zn(2+). The active site involves D68. D90 provides a ligand contact to Zn(2+). The active-site Proton acceptor is E117. Zn(2+) is bound by residues E118, E139, and H297.

The protein belongs to the peptidase M20A family. LysK subfamily. Zn(2+) is required as a cofactor. Requires Co(2+) as cofactor.

It is found in the cytoplasm. It catalyses the reaction [amino-group carrier protein]-C-terminal-gamma-(L-lysyl)-L-glutamate + H2O = [amino-group carrier protein]-C-terminal-L-glutamate + L-lysine. The catalysed reaction is [amino-group carrier protein]-C-terminal-gamma-(L-ornithyl)-L-glutamate + H2O = [amino-group carrier protein]-C-terminal-L-glutamate + L-ornithine. Its pathway is amino-acid biosynthesis; L-lysine biosynthesis via AAA pathway; L-lysine from L-alpha-aminoadipate (Thermus route): step 5/5. It functions in the pathway amino-acid biosynthesis; L-arginine biosynthesis. Functionally, catalyzes the release of L-lysine from [LysW]-gamma-L-lysine and the release of L-ornithine from [LysW]-L-ornithine. The sequence is that of Putative [LysW]-lysine/[LysW]-ornithine hydrolase from Pyrococcus horikoshii (strain ATCC 700860 / DSM 12428 / JCM 9974 / NBRC 100139 / OT-3).